The chain runs to 338 residues: Protein SGT1 homolog (338 aa).

Ala-2 is subject to N-acetylalanine. TPR repeat units follow at residues 11 to 45 (AASR…KPDD), 46 to 79 (APYY…NPNS), and 80 to 113 (STAL…NSAD). One can recognise a CS domain in the interval 142–231 (QSKIKYDWYQ…PEAVRWEKLE (90 aa)). The SGS domain maps to 249 to 338 (LYPSSSHYTR…PPDDMEWKKY (90 aa)). Residue Ser-254 is modified to Phosphoserine. At Thr-257 the chain carries Phosphothreonine. Lys-268 participates in a covalent cross-link: Glycyl lysine isopeptide (Lys-Gly) (interchain with G-Cter in SUMO1); alternate. Lys-268 participates in a covalent cross-link: Glycyl lysine isopeptide (Lys-Gly) (interchain with G-Cter in SUMO2); alternate. At Ser-304 the chain carries Phosphoserine.

The protein belongs to the SGT1 family. In terms of assembly, probably associates with SCF (SKP1-CUL1-F-box protein) complex through interaction with SKP1. Interacts with S100A6. Interacts with HSP90. Post-translationally, phosphorylated at Ser-254 and Ser-304, dephosphorylation promotes nuclear translocation, most likely due to disruption of the SUGT1-HSP90 complex.

The protein resides in the cytoplasm. It is found in the nucleus. Its function is as follows. May play a role in ubiquitination and subsequent proteasomal degradation of target proteins. The protein is Protein SGT1 homolog of Bos taurus (Bovine).